Here is a 70-residue protein sequence, read N- to C-terminus: Probable protein transport protein Sec61 subunit gamma (70 aa).

Topologically, residues 1 to 33 (MADNADDLFQIPKNFYKEGSHFIKRCVKPDRKE) are cytoplasmic. Residues 34–62 (FLSISKAVATGFVLMGLIGYIIKLIHIPI) form a helical membrane-spanning segment. At 63–70 (NKVLVGGA) the chain is on the extracellular side.

This sequence belongs to the SecE/SEC61-gamma family. Heterotrimeric complex composed of SEC61-alpha, SEC61-beta and SEC61-gamma.

Its subcellular location is the endoplasmic reticulum membrane. Necessary for protein translocation in the endoplasmic reticulum. This is Probable protein transport protein Sec61 subunit gamma (sss1) from Schizosaccharomyces pombe (strain 972 / ATCC 24843) (Fission yeast).